Reading from the N-terminus, the 146-residue chain is MDKQRGFTLIELMVVIGIIAILSAIGIPAYQNYLRKAALTDMLQTFVPYRTAVELCALEHGGLDTCDGGSNGIPSPTTTRYVSAMSVAKGVVSLTGQESLNGLSVVMTPGWDNANGVTGWTRNCNIQSDSALQQACEDVFRFDDAN.

Positions 1–6 (MDKQRG) are cleaved as a propeptide — leader sequence. The residue at position 7 (Phe7) is an N-methylphenylalanine. Residues 7-27 (FTLIELMVVIGIIAILSAIGI) form a helical membrane-spanning segment.

This sequence belongs to the N-Me-Phe pilin family.

It localises to the fimbrium. The protein localises to the membrane. In terms of biological role, major component of the type IV pilus (T4P) that plays a role in cell adhesion and motility. Not produced when grown under standard laboratory conditions. The sequence is that of Prepilin peptidase-dependent protein D (ppdD) from Escherichia coli (strain K12).